Reading from the N-terminus, the 201-residue chain is Translation initiation factor IF-3 (201 aa).

Residues 167–201 are disordered; sequence PHRGAKTRARARHPGEPAGGPPPKPTAGDSKAAPN. The span at 169–178 shows a compositional bias: basic residues; the sequence is RGAKTRARAR.

It belongs to the IF-3 family. In terms of assembly, monomer.

The protein resides in the cytoplasm. In terms of biological role, IF-3 binds to the 30S ribosomal subunit and shifts the equilibrium between 70S ribosomes and their 50S and 30S subunits in favor of the free subunits, thus enhancing the availability of 30S subunits on which protein synthesis initiation begins. In Mycobacterium bovis (strain ATCC BAA-935 / AF2122/97), this protein is Translation initiation factor IF-3.